We begin with the raw amino-acid sequence, 288 residues long: Elongation factor Ts (288 aa).

Residues 79–82 (TDFV) are involved in Mg(2+) ion dislocation from EF-Tu.

It belongs to the EF-Ts family.

The protein localises to the cytoplasm. Functionally, associates with the EF-Tu.GDP complex and induces the exchange of GDP to GTP. It remains bound to the aminoacyl-tRNA.EF-Tu.GTP complex up to the GTP hydrolysis stage on the ribosome. The protein is Elongation factor Ts of Ehrlichia chaffeensis (strain ATCC CRL-10679 / Arkansas).